Here is a 556-residue protein sequence, read N- to C-terminus: Arginine--tRNA ligase (556 aa).

The 'HIGH' region motif lies at 132-142 (ANPTGDLHLGH).

The protein belongs to the class-I aminoacyl-tRNA synthetase family. Monomer.

It localises to the cytoplasm. It carries out the reaction tRNA(Arg) + L-arginine + ATP = L-arginyl-tRNA(Arg) + AMP + diphosphate. The sequence is that of Arginine--tRNA ligase from Bacillus velezensis (strain DSM 23117 / BGSC 10A6 / LMG 26770 / FZB42) (Bacillus amyloliquefaciens subsp. plantarum).